The sequence spans 899 residues: Putative lipoxygenase 5 (899 aa).

Disordered regions lie at residues 15 to 34 (AGSR…RSTA), 48 to 68 (APVE…SVAA), and 258 to 291 (VASA…SAES). Residues 68–204 (ARAVVTVRRR…VSRDRRVFFS (137 aa)) form the PLAT domain. The region spanning 207–899 (PYLPSETPPG…CRGVPNSVTI (693 aa)) is the Lipoxygenase domain. Fe cation is bound by residues H559, H564, H751, N755, and I899.

The protein belongs to the lipoxygenase family. Fe cation serves as cofactor.

It carries out the reaction (9Z,12Z)-octadecadienoate + O2 = (13S)-hydroperoxy-(9Z,11E)-octadecadienoate. The enzyme catalyses (9Z,12Z,15Z)-octadecatrienoate + O2 = (13S)-hydroperoxy-(9Z,11E,15Z)-octadecatrienoate. It functions in the pathway lipid metabolism; oxylipin biosynthesis. Its function is as follows. Plant lipoxygenase may be involved in a number of diverse aspects of plant physiology including growth and development, pest resistance, and senescence or responses to wounding. Catalyzes the hydroperoxidation of lipids containing a cis,cis-1,4-pentadiene structure. This Oryza sativa subsp. japonica (Rice) protein is Putative lipoxygenase 5.